The following is a 30-amino-acid chain: Cycloviolacin-O18 (30 aa).

A cross-link (cyclopeptide (Gly-Asn)) is located at residues 1-30 (GIPCGESCVYIPCTVTALAGCKCKSKVCYN). 3 disulfides stabilise this stretch: C4-C21, C8-C23, and C13-C28.

In terms of processing, this is a cyclic peptide. Expressed in leaves, petals and petioles but not in roots and runners (at protein level).

Probably participates in a plant defense mechanism. This chain is Cycloviolacin-O18, found in Viola odorata (Sweet violet).